Reading from the N-terminus, the 420-residue chain is MTTSPELVTGKAFPNVVVTGIAMTTALATDAETTWKLLLDNQSGIRMLDDPFIEEFNLPVRIGGHLLEEFDHQLTRVELRRMGYLQRMSTVLSRRLWENAGSPEVDTNRLMVSIGTGLGSAEELVFSYDDMRARGMKAVSPLAVQKYMPNGAAAAVGLEHHAKAGVMTPVSACASGSEAIAHAWQQIVLGEADSAICGGVETKIEAVPIAGFSQMRIVMSTKNDNPAGACRPFDRDRDGFVFGEAGALMLIETEDSAKARSANILARIMGASITSDGFHMVAPDPNGERAGHAIARAVHLAGLSPSDIDHVNAHATGTQVGDLAEAKAINKALCNNRPAVYAPKSALGHSVGAVGAVESILTVLALRDQVIPPTLNLVNLDPDIDLDVVAGKPRPGDYRYAVNNSFGFGGHNVAIAFGCY.

One can recognise a Ketosynthase family 3 (KS3) domain in the interval 13 to 419 (FPNVVVTGIA…GHNVAIAFGC (407 aa)). Residues Cys-173, His-314, and His-349 each act as for beta-ketoacyl synthase activity in the active site.

Belongs to the thiolase-like superfamily. Beta-ketoacyl-ACP synthases family.

The protein resides in the cytoplasm. The catalysed reaction is an ultra-long-chain di-unsaturated fatty acyl-[ACP] + malonyl-[ACP] + H(+) = a 3-oxo-ultra-long-chain di-unsaturated fatty acyl-[ACP] + holo-[ACP] + CO2. It participates in lipid metabolism; mycolic acid biosynthesis. Functionally, part of the mycobacterial fatty acid elongation system FAS-II, which is involved in mycolic acid biosynthesis. Catalyzes the elongation of long chain acyl-ACP substrates by the addition of two carbons from malonyl-ACP to an acyl acceptor. Involved in extension of the mycolate chains to full lengths and produces longer chain multiunsaturated hydrocarbons averaging 54 carbons in length. The sequence is that of 3-oxoacyl-[acyl-carrier-protein] synthase 2 (kasB) from Mycobacterium leprae (strain TN).